Here is a 377-residue protein sequence, read N- to C-terminus: Probable staphylococcal-like nuclease CAN3 (377 aa).

A lipid anchor (N-myristoyl glycine) is attached at Gly2. A lipid anchor (S-palmitoyl cysteine) is attached at Cys7. The segment at 15 to 57 (GDHYPYYKPTSRPHYQPPHYHGQPAAPPAPPQQQPLGPHGVTP) is disordered. Residues 27 to 38 (PHYQPPHYHGQP) show a composition bias toward low complexity. One can recognise a TNase-like domain in the interval 177–353 (NTLPVYDKCI…KAANRGLWAS (177 aa)). A Ca(2+)-binding site is contributed by Asp190. Residue Arg260 is part of the active site. Asp265 contacts Ca(2+). Catalysis depends on residues Glu268 and Arg302.

It belongs to the thermonuclease family. It depends on Ca(2+) as a cofactor.

The protein resides in the cell membrane. Its function is as follows. Enzyme that catalyzes the hydrolysis of both DNA and RNA at the 5' position of the phosphodiester bond. The protein is Probable staphylococcal-like nuclease CAN3 of Oryza sativa subsp. japonica (Rice).